The following is a 286-amino-acid chain: Pyridoxal kinase PdxY (286 aa).

Residues S9 and 44–45 (TQ) each bind substrate. The ATP site is built by D111, E148, and K181. Position 222 (D222) interacts with substrate.

Belongs to the pyridoxine kinase family. PdxY subfamily. In terms of assembly, homodimer. The cofactor is Mg(2+).

The catalysed reaction is pyridoxal + ATP = pyridoxal 5'-phosphate + ADP + H(+). Its pathway is cofactor metabolism; pyridoxal 5'-phosphate salvage; pyridoxal 5'-phosphate from pyridoxal: step 1/1. Its function is as follows. Pyridoxal kinase involved in the salvage pathway of pyridoxal 5'-phosphate (PLP). Catalyzes the phosphorylation of pyridoxal to PLP. This is Pyridoxal kinase PdxY from Histophilus somni (strain 129Pt) (Haemophilus somnus).